Reading from the N-terminus, the 409-residue chain is Peptidase T (409 aa).

H78 contacts Zn(2+). D80 is a catalytic residue. Zn(2+) is bound at residue D140. Residue E173 is the Proton acceptor of the active site. Zn(2+) contacts are provided by E174, D196, and H379.

This sequence belongs to the peptidase M20B family. The cofactor is Zn(2+).

Its subcellular location is the cytoplasm. It catalyses the reaction Release of the N-terminal residue from a tripeptide.. In terms of biological role, cleaves the N-terminal amino acid of tripeptides. The sequence is that of Peptidase T from Escherichia coli (strain SE11).